Reading from the N-terminus, the 144-residue chain is Large ribosomal subunit protein uL15 (144 aa).

The disordered stretch occupies residues 1–53 (MRLNTLSPAEGAKHNAKRLGRGIGSGLGKTSGRGHKGQKARTGGGVRRGFEGG). The segment covering 21 to 31 (RGIGSGLGKTS) has biased composition (gly residues).

Belongs to the universal ribosomal protein uL15 family. In terms of assembly, part of the 50S ribosomal subunit.

In terms of biological role, binds to the 23S rRNA. This Histophilus somni (strain 129Pt) (Haemophilus somnus) protein is Large ribosomal subunit protein uL15.